The chain runs to 530 residues: Ubiquitin carboxyl-terminal hydrolase 17-like protein 12 (530 aa).

The 296-residue stretch at 80–375 (AGLQNMGNTC…QAYVLFYIQK (296 aa)) folds into the USP domain. The Nucleophile role is filled by Cys-89. His-334 functions as the Proton acceptor in the catalytic mechanism. 2 stretches are compositionally biased toward basic and acidic residues: residues 382-392 (SESVSRGREPR) and 398-412 (DTDR…KRDH). 2 disordered regions span residues 382–412 (SESV…KRDH) and 477–530 (NHHP…LVCQ). The span at 484 to 495 (SSLLKLSSTTPT) shows a compositional bias: low complexity. Positions 496 to 505 (HQESMNTGTL) are enriched in polar residues. Positions 510–524 (GRARRSKGKNKHSKR) are enriched in basic residues.

The protein belongs to the peptidase C19 family. USP17 subfamily.

It localises to the nucleus. The protein localises to the endoplasmic reticulum. It catalyses the reaction Thiol-dependent hydrolysis of ester, thioester, amide, peptide and isopeptide bonds formed by the C-terminal Gly of ubiquitin (a 76-residue protein attached to proteins as an intracellular targeting signal).. Deubiquitinating enzyme that removes conjugated ubiquitin from specific proteins to regulate different cellular processes that may include cell proliferation, progression through the cell cycle, apoptosis, cell migration, and the cellular response to viral infection. This Homo sapiens (Human) protein is Ubiquitin carboxyl-terminal hydrolase 17-like protein 12 (USP17L12).